The primary structure comprises 130 residues: Small ribosomal subunit protein uS9 (130 aa).

Over residues Thr105 to Lys115 the composition is skewed to basic and acidic residues. The tract at residues Thr105–Arg130 is disordered. The span at Val116–Arg130 shows a compositional bias: basic residues.

It belongs to the universal ribosomal protein uS9 family.

This Buchnera aphidicola subsp. Schizaphis graminum (strain Sg) protein is Small ribosomal subunit protein uS9.